The sequence spans 332 residues: Transaldolase (332 aa).

The active-site Schiff-base intermediate with substrate is K136.

Belongs to the transaldolase family. Type 1 subfamily.

The protein localises to the cytoplasm. It carries out the reaction D-sedoheptulose 7-phosphate + D-glyceraldehyde 3-phosphate = D-erythrose 4-phosphate + beta-D-fructose 6-phosphate. It functions in the pathway carbohydrate degradation; pentose phosphate pathway; D-glyceraldehyde 3-phosphate and beta-D-fructose 6-phosphate from D-ribose 5-phosphate and D-xylulose 5-phosphate (non-oxidative stage): step 2/3. Its function is as follows. Transaldolase is important for the balance of metabolites in the pentose-phosphate pathway. The polypeptide is Transaldolase (Nostoc sp. (strain PCC 7120 / SAG 25.82 / UTEX 2576)).